Reading from the N-terminus, the 449-residue chain is Exopolygalacturonase X-2 (449 aa).

A signal peptide spans 1 to 24; it reads MGFKRTIGLLLGILLALDQVSVLA. 3 N-linked (GlcNAc...) asparagine glycosylation sites follow: Asn-136, Asn-172, and Asn-208. Residues 240 to 261 form a PbH1 1 repeat; the sequence is SDNVVIQNSVINHDDDCVSFKP. The Proton donor role is filled by Asp-254. Cys-256 and Cys-273 form a disulfide bridge. N-linked (GlcNAc...) asparagine glycosylation is found at Asn-262 and Asn-274. PbH1 repeat units lie at residues 263–283 and 294–315; these read STNIIVQGLHCNGSHGISVGS and VSDLYIYNNTMANTTTAARLKV. The active site involves His-277. 4 N-linked (GlcNAc...) asparagine glycosylation sites follow: Asn-301, Asn-306, Asn-340, and Asn-365. An intrachain disulfide couples Cys-403 to Cys-409. 2 N-linked (GlcNAc...) asparagine glycosylation sites follow: Asn-416 and Asn-421.

It belongs to the glycosyl hydrolase 28 family.

It is found in the secreted. It catalyses the reaction [(1-&gt;4)-alpha-D-galacturonosyl](n) + H2O = alpha-D-galacturonate + [(1-&gt;4)-alpha-D-galacturonosyl](n-1). Functionally, specific in hydrolyzing the terminal glycosidic bond of polygalacturonic acid and oligogalacturonates. The polypeptide is Exopolygalacturonase X-2 (pgaX-2) (Emericella nidulans (strain FGSC A4 / ATCC 38163 / CBS 112.46 / NRRL 194 / M139) (Aspergillus nidulans)).